The chain runs to 164 residues: UPF0304 protein YPDSF_1971 (164 aa).

Belongs to the UPF0304 family.

This chain is UPF0304 protein YPDSF_1971, found in Yersinia pestis (strain Pestoides F).